Reading from the N-terminus, the 188-residue chain is Achaete-scute homolog 5 (188 aa).

The tract at residues 80-93 (AFIQKRNERERQRV) is basic motif. Residues 80–132 (AFIQKRNERERQRVKCVNEGYARLRGHLPGALTEKRLSKVETLRAAIRYIKYL) form the bHLH domain. A helix-loop-helix motif region spans residues 94-132 (KCVNEGYARLRGHLPGALTEKRLSKVETLRAAIRYIKYL). The interval 139–188 (TPDGAPPPATSPPPAHTGHSNVPQPSSLVAESSGSPFSSSPFLESEEPSL) is disordered. Residues 142–153 (GAPPPATSPPPA) show a composition bias toward pro residues. The segment covering 158–168 (SNVPQPSSLVA) has biased composition (polar residues). The segment covering 169-181 (ESSGSPFSSSPFL) has biased composition (low complexity).

In terms of assembly, interacts with transcription factor TCF3/E12. Expressed in teeth (at protein level).

It is found in the nucleus. Transcription factor. Probably binds E-box motifs 5'-CANNTG-3' in complex with transcription factor TCF3/E12. Negatively modulates transcription of target genes such as CDH1/E-cadherin, perhaps by recruiting the PRC2 repressive complex to regulatory elements. Regulates ameloblast development and tooth germ growth, perhaps acting by positively modulating migration of inner enamel epithelium (IEE) cells. Plays a role in enamel formation. The sequence is that of Achaete-scute homolog 5 from Mus musculus (Mouse).